The following is a 192-amino-acid chain: Xanthine phosphoribosyltransferase (192 aa).

Xanthine contacts are provided by L20 and N27. Position 128–132 (128–132) interacts with 5-phospho-alpha-D-ribose 1-diphosphate; the sequence is AQGEA. K156 is a xanthine binding site.

This sequence belongs to the purine/pyrimidine phosphoribosyltransferase family. Xpt subfamily. Homodimer.

It is found in the cytoplasm. The catalysed reaction is XMP + diphosphate = xanthine + 5-phospho-alpha-D-ribose 1-diphosphate. It participates in purine metabolism; XMP biosynthesis via salvage pathway; XMP from xanthine: step 1/1. Its function is as follows. Converts the preformed base xanthine, a product of nucleic acid breakdown, to xanthosine 5'-monophosphate (XMP), so it can be reused for RNA or DNA synthesis. The polypeptide is Xanthine phosphoribosyltransferase (Lactobacillus helveticus (strain DPC 4571)).